The following is a 418-amino-acid chain: Tol-Pal system protein TolB (418 aa).

The first 21 residues, 1–21 (MKLFVQLVLFISLFIPYSTKA), serve as a signal peptide directing secretion.

Belongs to the TolB family. As to quaternary structure, the Tol-Pal system is composed of five core proteins: the inner membrane proteins TolA, TolQ and TolR, the periplasmic protein TolB and the outer membrane protein Pal. They form a network linking the inner and outer membranes and the peptidoglycan layer.

The protein resides in the periplasm. In terms of biological role, part of the Tol-Pal system, which plays a role in outer membrane invagination during cell division and is important for maintaining outer membrane integrity. The protein is Tol-Pal system protein TolB of Wolbachia pipientis subsp. Culex pipiens (strain wPip).